The chain runs to 317 residues: Secreted mono- and diacylglycerol lipase 3 (317 aa).

A signal peptide spans 1–29 (MMFADDLVRMAVLRFITVALAAITNVANA). Cysteines 61 and 310 form a disulfide. N-linked (GlcNAc...) asparagine glycosylation occurs at Asn108. Residue Ser175 is the Nucleophile of the active site. A glycan (N-linked (GlcNAc...) asparagine) is linked at Asn194. Asp234 is an active-site residue. An N-linked (GlcNAc...) asparagine glycan is attached at Asn258. The active site involves His294.

It belongs to the AB hydrolase superfamily. Lipase family. Class 3 subfamily.

Its subcellular location is the secreted. It carries out the reaction a monoacylglycerol + H2O = glycerol + a fatty acid + H(+). The catalysed reaction is a diacylglycerol + H2O = a monoacylglycerol + a fatty acid + H(+). Secreted mono- and diacylglycerol lipase involved in plant virulence. Has a substrate preference for p-nitrophenyl esters with a carbon chain length of C10 (p-nitrophenyl caprate). This chain is Secreted mono- and diacylglycerol lipase 3, found in Gibberella zeae (strain ATCC MYA-4620 / CBS 123657 / FGSC 9075 / NRRL 31084 / PH-1) (Wheat head blight fungus).